The following is a 130-amino-acid chain: Small ribosomal subunit protein uS9 (130 aa).

It belongs to the universal ribosomal protein uS9 family.

The polypeptide is Small ribosomal subunit protein uS9 (Exiguobacterium sibiricum (strain DSM 17290 / CCUG 55495 / CIP 109462 / JCM 13490 / 255-15)).